The following is a 346-amino-acid chain: tRNA N6-adenosine threonylcarbamoyltransferase (346 aa).

Fe cation is bound by residues histidine 111 and histidine 115. Substrate contacts are provided by residues 134 to 138 (LVSGG), aspartate 167, glycine 180, and asparagine 279. Aspartate 307 contacts Fe cation.

This sequence belongs to the KAE1 / TsaD family. The cofactor is Fe(2+).

The protein resides in the cytoplasm. It catalyses the reaction L-threonylcarbamoyladenylate + adenosine(37) in tRNA = N(6)-L-threonylcarbamoyladenosine(37) in tRNA + AMP + H(+). Required for the formation of a threonylcarbamoyl group on adenosine at position 37 (t(6)A37) in tRNAs that read codons beginning with adenine. Is involved in the transfer of the threonylcarbamoyl moiety of threonylcarbamoyl-AMP (TC-AMP) to the N6 group of A37, together with TsaE and TsaB. TsaD likely plays a direct catalytic role in this reaction. The chain is tRNA N6-adenosine threonylcarbamoyltransferase from Burkholderia ambifaria (strain ATCC BAA-244 / DSM 16087 / CCUG 44356 / LMG 19182 / AMMD) (Burkholderia cepacia (strain AMMD)).